A 193-amino-acid chain; its full sequence is Adenine phosphoribosyltransferase (193 aa).

This sequence belongs to the purine/pyrimidine phosphoribosyltransferase family. Homodimer.

Its subcellular location is the cytoplasm. It catalyses the reaction AMP + diphosphate = 5-phospho-alpha-D-ribose 1-diphosphate + adenine. The protein operates within purine metabolism; AMP biosynthesis via salvage pathway; AMP from adenine: step 1/1. Its function is as follows. Catalyzes a salvage reaction resulting in the formation of AMP, that is energically less costly than de novo synthesis. In Bifidobacterium longum (strain NCC 2705), this protein is Adenine phosphoribosyltransferase.